The sequence spans 316 residues: Aspartate carbamoyltransferase catalytic subunit (316 aa).

Carbamoyl phosphate contacts are provided by arginine 56 and threonine 57. Lysine 84 serves as a coordination point for L-aspartate. Carbamoyl phosphate is bound by residues arginine 106, histidine 139, and glutamine 142. L-aspartate contacts are provided by arginine 172 and arginine 226. Residues glycine 267 and proline 268 each coordinate carbamoyl phosphate.

The protein belongs to the aspartate/ornithine carbamoyltransferase superfamily. ATCase family. Heterododecamer (2C3:3R2) of six catalytic PyrB chains organized as two trimers (C3), and six regulatory PyrI chains organized as three dimers (R2).

The enzyme catalyses carbamoyl phosphate + L-aspartate = N-carbamoyl-L-aspartate + phosphate + H(+). The protein operates within pyrimidine metabolism; UMP biosynthesis via de novo pathway; (S)-dihydroorotate from bicarbonate: step 2/3. Its function is as follows. Catalyzes the condensation of carbamoyl phosphate and aspartate to form carbamoyl aspartate and inorganic phosphate, the committed step in the de novo pyrimidine nucleotide biosynthesis pathway. The chain is Aspartate carbamoyltransferase catalytic subunit from Mycobacterium sp. (strain JLS).